Reading from the N-terminus, the 829-residue chain is Periplasmic nitrate reductase (829 aa).

The segment at residues 1–30 (MKMTRRAFVKANAAASAAAVAGITLPASAA) is a signal peptide (tat-type signal). The 4Fe-4S Mo/W bis-MGD-type domain occupies 41-97 (ITWDKAPCRFCGTGCSVLVGTQNGKVVATQGDPEAPVNKGLNCIKGYFLSKIMYGQD). [4Fe-4S] cluster-binding residues include Cys-48, Cys-51, Cys-55, and Cys-83. Mo-bis(molybdopterin guanine dinucleotide) is bound by residues Lys-85, Gln-152, Asn-177, Cys-181, 214–221 (WGSNMAEM), 245–249 (STYYH), 264–266 (QSD), Met-374, Gln-378, Asn-484, 510–511 (SD), Lys-533, Asp-560, and 718–727 (TGRVLEHWHT). Phe-794 serves as a coordination point for substrate. Residues Asn-802 and Lys-819 each coordinate Mo-bis(molybdopterin guanine dinucleotide).

It belongs to the prokaryotic molybdopterin-containing oxidoreductase family. NasA/NapA/NarB subfamily. In terms of assembly, component of the periplasmic nitrate reductase NapAB complex composed of NapA and NapB. Requires [4Fe-4S] cluster as cofactor. It depends on Mo-bis(molybdopterin guanine dinucleotide) as a cofactor. Predicted to be exported by the Tat system. The position of the signal peptide cleavage has not been experimentally proven.

It is found in the periplasm. The enzyme catalyses 2 Fe(II)-[cytochrome] + nitrate + 2 H(+) = 2 Fe(III)-[cytochrome] + nitrite + H2O. Functionally, catalytic subunit of the periplasmic nitrate reductase complex NapAB. Receives electrons from NapB and catalyzes the reduction of nitrate to nitrite. The protein is Periplasmic nitrate reductase of Vibrio parahaemolyticus serotype O3:K6 (strain RIMD 2210633).